The following is a 280-amino-acid chain: Orotidine 5'-phosphate decarboxylase (280 aa).

The Proton donor role is filled by Lys-97.

Belongs to the OMP decarboxylase family. Type 2 subfamily.

The enzyme catalyses orotidine 5'-phosphate + H(+) = UMP + CO2. It functions in the pathway pyrimidine metabolism; UMP biosynthesis via de novo pathway; UMP from orotate: step 2/2. The chain is Orotidine 5'-phosphate decarboxylase (pyrF) from Corynebacterium efficiens (strain DSM 44549 / YS-314 / AJ 12310 / JCM 11189 / NBRC 100395).